The primary structure comprises 89 residues: Large ribosomal subunit protein bL27 (89 aa).

The tract at residues 1–26 (MAHKKGVGSSRNGRDSESKRLGVKEG) is disordered. Basic and acidic residues predominate over residues 12–26 (NGRDSESKRLGVKEG).

This sequence belongs to the bacterial ribosomal protein bL27 family.

The protein is Large ribosomal subunit protein bL27 of Desulforamulus reducens (strain ATCC BAA-1160 / DSM 100696 / MI-1) (Desulfotomaculum reducens).